Consider the following 525-residue polypeptide: GMP synthase [glutamine-hydrolyzing] (525 aa).

The 199-residue stretch at 9–207 (RILILDFGSQ…VRDICQCEAL (199 aa)) folds into the Glutamine amidotransferase type-1 domain. The active-site Nucleophile is the Cys-86. Residues His-181 and Glu-183 contribute to the active site. A GMPS ATP-PPase domain is found at 208–400 (WTPAKIIDDA…LGLPYDMLYR (193 aa)). 235-241 (SGGVDSS) contacts ATP.

Homodimer.

It carries out the reaction XMP + L-glutamine + ATP + H2O = GMP + L-glutamate + AMP + diphosphate + 2 H(+). It functions in the pathway purine metabolism; GMP biosynthesis; GMP from XMP (L-Gln route): step 1/1. In terms of biological role, catalyzes the synthesis of GMP from XMP. This chain is GMP synthase [glutamine-hydrolyzing], found in Escherichia coli O127:H6 (strain E2348/69 / EPEC).